The following is a 593-amino-acid chain: Copine-5 (593 aa).

Positions 2 to 134 (EQPEDMASLS…SPGSRLEKPL (133 aa)) constitute a C2 1 domain. A Phosphoserine modification is found at Ser19. Positions 38, 44, 98, 100, 103, 108, and 110 each coordinate Ca(2+). At Ser103 the chain carries Phosphoserine. Residue Ser140 is modified to Phosphoserine. Residues 161–284 (KCGTIILSAE…ARGQSQFNIY (124 aa)) enclose the C2 2 domain. Ca(2+) is bound by residues Asp192, Asp198, Asp254, Asp256, and Asp262. In terms of domain architecture, VWFA spans 328 to 554 (NFTVAIDFTA…DVLAEIPDQL (227 aa)). The interval 562–593 (GIRPRPPPAAPTHSPSQSPARTPPASPLHTHI) is disordered. Positions 572–581 (PTHSPSQSPA) are enriched in low complexity.

It belongs to the copine family. The cofactor is Ca(2+). As to expression, expressed in the brain, heart, stomach, spleen, lymph node and testis. Expressed in melanocytes.

Its subcellular location is the perikaryon. The protein resides in the cell projection. Probable calcium-dependent phospholipid-binding protein that may play a role in calcium-mediated intracellular processes. Plays a role in dendrite formation by melanocytes. In Homo sapiens (Human), this protein is Copine-5.